The chain runs to 453 residues: Glutamyl-tRNA(Gln) amidotransferase subunit A (453 aa).

Catalysis depends on charge relay system residues Lys-53 and Ser-128. The active-site Acyl-ester intermediate is Ser-152.

The protein belongs to the amidase family. GatA subfamily. As to quaternary structure, heterotrimer of A, B and C subunits.

The enzyme catalyses L-glutamyl-tRNA(Gln) + L-glutamine + ATP + H2O = L-glutaminyl-tRNA(Gln) + L-glutamate + ADP + phosphate + H(+). In terms of biological role, allows the formation of correctly charged Gln-tRNA(Gln) through the transamidation of misacylated Glu-tRNA(Gln) in organisms which lack glutaminyl-tRNA synthetase. The reaction takes place in the presence of glutamine and ATP through an activated gamma-phospho-Glu-tRNA(Gln). The polypeptide is Glutamyl-tRNA(Gln) amidotransferase subunit A (Helicobacter pylori (strain P12)).